Consider the following 892-residue polypeptide: Alpha-actinin-1 (892 aa).

Met-1 carries the post-translational modification N-acetylmethionine. The interval 1 to 247 is actin-binding; sequence MDHYDSQQTN…IMTYVSSFYH (247 aa). Residue Ser-6 is modified to Phosphoserine. Phosphotyrosine; by FAK1 is present on Tyr-12. 2 Calponin-homology (CH) domains span residues 31–135 and 144–250; these read KQQR…LRFA and TSAK…HAFS. Residues Lys-95 and Lys-195 each carry the N6-acetyllysine modification. Spectrin repeat units lie at residues 274 to 384, 394 to 499, 509 to 620, and 630 to 733; these read QLME…WLLN, HLAE…ALER, QLYL…ALTE, and RLRK…EVEN. Residues 274–733 form an interaction with DDN region; the sequence is QLMEDYEKLA…IARTINEVEN (460 aa). Ser-471 is modified (phosphoserine). Lys-676 carries the N6-acetyllysine modification. Ser-677 carries the phosphoserine modification. EF-hand domains follow at residues 746-781 and 787-822; these read EQMNEFRASFNHFDRDHSGTLGPEEFKACLISLGYD and QGEAEFARIMSIVDPNRLGVVTFQAFIDFMSRETAD. Asp-759, Asp-761, Ser-763, Thr-765, and Glu-770 together coordinate Ca(2+). The residue at position 890 (Ser-890) is a Phosphoserine.

Belongs to the alpha-actinin family. As to quaternary structure, homodimer; antiparallel. Interacts with MYOZ2, TTID and LPP. Interacts with DDN. Interacts with PSD. Interacts with MICALL2. Interacts with DNM2 and CTTN. Interacts with PDLIM1. Interacts with PDLIM2. Interacts with PDLIM4 (via PDZ domain). Interacts with IGSF8.

It is found in the cytoplasm. The protein localises to the cytoskeleton. The protein resides in the myofibril. It localises to the sarcomere. Its subcellular location is the z line. It is found in the cell membrane. The protein localises to the cell junction. The protein resides in the cell projection. It localises to the ruffle. Its function is as follows. F-actin cross-linking protein which is thought to anchor actin to a variety of intracellular structures. Association with IGSF8 regulates the immune synapse formation and is required for efficient T-cell activation. This Rattus norvegicus (Rat) protein is Alpha-actinin-1 (Actn1).